Reading from the N-terminus, the 200-residue chain is ATP synthase subunit s, mitochondrial (200 aa).

The N-terminal 25 residues, 1–25, are a transit peptide targeting the mitochondrion; the sequence is MMMFGKISRQLCSLKKIPWSCDSRY. An N-terminal domain region spans residues 1 to 61; that stretch reads MMMFGKISRQ…SEWLLRCGAK (61 aa). Mg(2+) is bound at residue G59. 4 LRR repeats span residues 62-87, 88-116, 117-141, and 142-173; these read VRYCGHQKWLHDYNTLPGSSIDRYKI, QAIDATDSCIMDIGLDHMVGLEHVEKITL, CKCHYIEDNCLQRLSQLENLRKSLL, and ELEIIACGNVTDNGVIALRHFRNLKYLFLSDL. Mg(2+) is bound at residue T93.

This sequence belongs to the ATP synthase subunit s family. In terms of assembly, homotetramer. Associates with ATP synthase.

The protein localises to the mitochondrion. It is found in the mitochondrion inner membrane. In terms of biological role, involved in regulation of mitochondrial membrane ATP synthase. Necessary for H(+) conduction of ATP synthase. Facilitates energy-driven catalysis of ATP synthesis by blocking a proton leak through an alternative proton exit pathway. The sequence is that of ATP synthase subunit s, mitochondrial (Dmac2l) from Mus musculus (Mouse).